The chain runs to 297 residues: Phosphatidylserine decarboxylase proenzyme (297 aa).

Catalysis depends on charge relay system; for autoendoproteolytic cleavage activity residues Asp-100, His-157, and Ser-263. Ser-263 acts as the Schiff-base intermediate with substrate; via pyruvic acid; for decarboxylase activity in catalysis. Ser-263 carries the pyruvic acid (Ser); by autocatalysis modification.

It belongs to the phosphatidylserine decarboxylase family. PSD-B subfamily. Prokaryotic type I sub-subfamily. In terms of assembly, heterodimer of a large membrane-associated beta subunit and a small pyruvoyl-containing alpha subunit. Requires pyruvate as cofactor. Is synthesized initially as an inactive proenzyme. Formation of the active enzyme involves a self-maturation process in which the active site pyruvoyl group is generated from an internal serine residue via an autocatalytic post-translational modification. Two non-identical subunits are generated from the proenzyme in this reaction, and the pyruvate is formed at the N-terminus of the alpha chain, which is derived from the carboxyl end of the proenzyme. The autoendoproteolytic cleavage occurs by a canonical serine protease mechanism, in which the side chain hydroxyl group of the serine supplies its oxygen atom to form the C-terminus of the beta chain, while the remainder of the serine residue undergoes an oxidative deamination to produce ammonia and the pyruvoyl prosthetic group on the alpha chain. During this reaction, the Ser that is part of the protease active site of the proenzyme becomes the pyruvoyl prosthetic group, which constitutes an essential element of the active site of the mature decarboxylase.

Its subcellular location is the cell membrane. The enzyme catalyses a 1,2-diacyl-sn-glycero-3-phospho-L-serine + H(+) = a 1,2-diacyl-sn-glycero-3-phosphoethanolamine + CO2. The protein operates within phospholipid metabolism; phosphatidylethanolamine biosynthesis; phosphatidylethanolamine from CDP-diacylglycerol: step 2/2. In terms of biological role, catalyzes the formation of phosphatidylethanolamine (PtdEtn) from phosphatidylserine (PtdSer). The polypeptide is Phosphatidylserine decarboxylase proenzyme (Actinobacillus pleuropneumoniae serotype 5b (strain L20)).